The chain runs to 91 residues: Protein LURE 1.3 (91 aa).

The signal sequence occupies residues 1-20; the sequence is MKLPFIFLITLLIFVSSCTS. Residue Asn24 is glycosylated (N-linked (GlcNAc...) asparagine). Disulfide bonds link Cys59-Cys76, Cys62-Cys83, and Cys66-Cys85. A PRK6 binding region spans residues 68–88; the sequence is RRGKYIRTCSFERKLCRCSIS.

This sequence belongs to the DEFL family. In terms of assembly, binds to PRK6 LRRs. Expressed in the pistil. Detected exclusively in the synergid cells.

Its subcellular location is the secreted. Pollen tube attractants guiding pollen tubes to the ovular micropyle. Attracts pollen tubes from both A.thaliana and A.lyrata. The sequence is that of Protein LURE 1.3 from Arabidopsis thaliana (Mouse-ear cress).